The chain runs to 341 residues: Methionine import ATP-binding protein MetN (341 aa).

The region spanning 2 to 241 (INLQDVSKVY…PKEQMTKRFV (240 aa)) is the ABC transporter domain. ATP is bound at residue 38-45 (GYSGAGKS).

It belongs to the ABC transporter superfamily. Methionine importer (TC 3.A.1.24) family. The complex is composed of two ATP-binding proteins (MetN), two transmembrane proteins (MetP) and a solute-binding protein (MetQ).

The protein localises to the cell membrane. The catalysed reaction is L-methionine(out) + ATP + H2O = L-methionine(in) + ADP + phosphate + H(+). It carries out the reaction D-methionine(out) + ATP + H2O = D-methionine(in) + ADP + phosphate + H(+). Functionally, part of the ABC transporter complex MetNPQ involved in methionine import. Responsible for energy coupling to the transport system. It has also been shown to be involved in methionine sulfoxide transport. This Bacillus subtilis (strain 168) protein is Methionine import ATP-binding protein MetN.